Reading from the N-terminus, the 209-residue chain is Scoloptoxin SSD346 (209 aa).

Residues 1 to 22 (NILLSSTLFVLLMFQIIGSGLG) form the signal peptide.

In terms of processing, contains 2 disulfide bonds. In terms of tissue distribution, expressed by the venom gland.

The protein localises to the secreted. Its function is as follows. May act as a voltage-gated calcium channel inhibitor. The protein is Scoloptoxin SSD346 of Scolopendra dehaani (Thai centipede).